We begin with the raw amino-acid sequence, 336 residues long: IgLON family member 5 (336 aa).

The signal sequence occupies residues 1–30 (MPPPAPGARLRLLAAAALAGLAVISRGLLS). 3 consecutive Ig-like C2-type domains span residues 33 to 122 (LEFN…QPYT), 132 to 217 (PARI…VNYP), and 218 to 307 (PTIT…MRLL). N-linked (GlcNAc...) asparagine glycans are attached at residues N41, N49, N67, and N137. C54 and C112 are disulfide-bonded. Disulfide bonds link C154–C195 and C238–C291. A glycan (N-linked (GlcNAc...) asparagine) is linked at N288.

This sequence belongs to the immunoglobulin superfamily. IgLON family.

Its subcellular location is the secreted. The polypeptide is IgLON family member 5 (IGLON5) (Homo sapiens (Human)).